The primary structure comprises 211 residues: ATP phosphoribosyltransferase (211 aa).

It belongs to the ATP phosphoribosyltransferase family. Short subfamily. As to quaternary structure, heteromultimer composed of HisG and HisZ subunits.

Its subcellular location is the cytoplasm. The enzyme catalyses 1-(5-phospho-beta-D-ribosyl)-ATP + diphosphate = 5-phospho-alpha-D-ribose 1-diphosphate + ATP. Its pathway is amino-acid biosynthesis; L-histidine biosynthesis; L-histidine from 5-phospho-alpha-D-ribose 1-diphosphate: step 1/9. Its function is as follows. Catalyzes the condensation of ATP and 5-phosphoribose 1-diphosphate to form N'-(5'-phosphoribosyl)-ATP (PR-ATP). Has a crucial role in the pathway because the rate of histidine biosynthesis seems to be controlled primarily by regulation of HisG enzymatic activity. The sequence is that of ATP phosphoribosyltransferase from Pseudomonas savastanoi pv. phaseolicola (strain 1448A / Race 6) (Pseudomonas syringae pv. phaseolicola (strain 1448A / Race 6)).